A 150-amino-acid polypeptide reads, in one-letter code: D-aminoacyl-tRNA deacylase (150 aa).

The Gly-cisPro motif, important for rejection of L-amino acids signature appears at G137–P138.

This sequence belongs to the DTD family. In terms of assembly, homodimer.

It is found in the cytoplasm. The enzyme catalyses glycyl-tRNA(Ala) + H2O = tRNA(Ala) + glycine + H(+). It carries out the reaction a D-aminoacyl-tRNA + H2O = a tRNA + a D-alpha-amino acid + H(+). An aminoacyl-tRNA editing enzyme that deacylates mischarged D-aminoacyl-tRNAs. Also deacylates mischarged glycyl-tRNA(Ala), protecting cells against glycine mischarging by AlaRS. Acts via tRNA-based rather than protein-based catalysis; rejects L-amino acids rather than detecting D-amino acids in the active site. By recycling D-aminoacyl-tRNA to D-amino acids and free tRNA molecules, this enzyme counteracts the toxicity associated with the formation of D-aminoacyl-tRNA entities in vivo and helps enforce protein L-homochirality. In Alkalilimnicola ehrlichii (strain ATCC BAA-1101 / DSM 17681 / MLHE-1), this protein is D-aminoacyl-tRNA deacylase.